A 453-amino-acid chain; its full sequence is Macrophage scavenger receptor types I and II (453 aa).

Over 1–50 (MAQWDDFPDQQEDTDSCTESVKFDARSVTALLPPHPKNGPTLQERMKSYK) the chain is Cytoplasmic. Ser27 is subject to Phosphoserine. A helical; Signal-anchor for type II membrane protein membrane pass occupies residues 51–76 (TALITLYLIVFVVLVPIIGIVAAQLL). Positions 77–108 (KWETKNCTVGSVNADISPSPEGKGNGSEDEMR) are spacer. Residues 77-453 (KWETKNCTVG…DEDAGVTCTT (377 aa)) lie on the Extracellular side of the membrane. Residues Asn82, Asn101, Asn142, Asn183, Asn220, Asn248, and Asn266 are each glycosylated (N-linked (GlcNAc...) asparagine). Residues 194–255 (ETLNGRVQEN…LNNITNDLRL (62 aa)) adopt a coiled-coil conformation. Disordered stretches follow at residues 267 to 295 (ITLL…PGFP) and 313 to 349 (PGVR…QRQS). Residues 272–343 (GPPGPPGEKG…KGQKGEKGSG (72 aa)) form the Collagen-like domain. The 101-residue stretch at 352–452 (VRLVGGSGPH…HDEDAGVTCT (101 aa)) folds into the SRCR domain. Intrachain disulfides connect Cys377/Cys441, Cys390/Cys451, and Cys421/Cys431.

As to quaternary structure, homotrimer. Interacts with MYO18A.

Its subcellular location is the membrane. Functionally, membrane glycoproteins implicated in the pathologic deposition of cholesterol in arterial walls during atherogenesis. Two types of receptor subunits exist. These receptors mediate the endocytosis of a diverse group of macromolecules, including modified low density lipoproteins (LDL). This is Macrophage scavenger receptor types I and II (MSR1) from Bos taurus (Bovine).